The primary structure comprises 257 residues: Tryptophan synthase alpha chain (257 aa).

Active-site proton acceptor residues include Glu-47 and Asp-58.

It belongs to the TrpA family. As to quaternary structure, tetramer of two alpha and two beta chains.

It catalyses the reaction (1S,2R)-1-C-(indol-3-yl)glycerol 3-phosphate + L-serine = D-glyceraldehyde 3-phosphate + L-tryptophan + H2O. It participates in amino-acid biosynthesis; L-tryptophan biosynthesis; L-tryptophan from chorismate: step 5/5. The alpha subunit is responsible for the aldol cleavage of indoleglycerol phosphate to indole and glyceraldehyde 3-phosphate. The protein is Tryptophan synthase alpha chain of Listeria welshimeri serovar 6b (strain ATCC 35897 / DSM 20650 / CCUG 15529 / CIP 8149 / NCTC 11857 / SLCC 5334 / V8).